The chain runs to 285 residues: Phosphatidylserine decarboxylase proenzyme (285 aa).

Active-site charge relay system; for autoendoproteolytic cleavage activity residues include Asp89, His146, and Ser252. The Schiff-base intermediate with substrate; via pyruvic acid; for decarboxylase activity role is filled by Ser252. Residue Ser252 is modified to Pyruvic acid (Ser); by autocatalysis.

Belongs to the phosphatidylserine decarboxylase family. PSD-B subfamily. Prokaryotic type I sub-subfamily. Heterodimer of a large membrane-associated beta subunit and a small pyruvoyl-containing alpha subunit. Pyruvate serves as cofactor. In terms of processing, is synthesized initially as an inactive proenzyme. Formation of the active enzyme involves a self-maturation process in which the active site pyruvoyl group is generated from an internal serine residue via an autocatalytic post-translational modification. Two non-identical subunits are generated from the proenzyme in this reaction, and the pyruvate is formed at the N-terminus of the alpha chain, which is derived from the carboxyl end of the proenzyme. The autoendoproteolytic cleavage occurs by a canonical serine protease mechanism, in which the side chain hydroxyl group of the serine supplies its oxygen atom to form the C-terminus of the beta chain, while the remainder of the serine residue undergoes an oxidative deamination to produce ammonia and the pyruvoyl prosthetic group on the alpha chain. During this reaction, the Ser that is part of the protease active site of the proenzyme becomes the pyruvoyl prosthetic group, which constitutes an essential element of the active site of the mature decarboxylase.

The protein resides in the cell membrane. The enzyme catalyses a 1,2-diacyl-sn-glycero-3-phospho-L-serine + H(+) = a 1,2-diacyl-sn-glycero-3-phosphoethanolamine + CO2. Its pathway is phospholipid metabolism; phosphatidylethanolamine biosynthesis; phosphatidylethanolamine from CDP-diacylglycerol: step 2/2. Its function is as follows. Catalyzes the formation of phosphatidylethanolamine (PtdEtn) from phosphatidylserine (PtdSer). In Vibrio vulnificus (strain CMCP6), this protein is Phosphatidylserine decarboxylase proenzyme.